A 351-amino-acid chain; its full sequence is Large ribosomal subunit protein uL3 (351 aa).

2 disordered regions span residues 1–31 (MGHR…TPRT) and 246–271 (KGSR…GQLG).

It belongs to the universal ribosomal protein uL3 family. In terms of assembly, part of the 50S ribosomal subunit. Forms a cluster with proteins L14 and L24e.

One of the primary rRNA binding proteins, it binds directly near the 3'-end of the 23S rRNA, where it nucleates assembly of the 50S subunit. The chain is Large ribosomal subunit protein uL3 from Saccharolobus solfataricus (strain ATCC 35092 / DSM 1617 / JCM 11322 / P2) (Sulfolobus solfataricus).